A 229-amino-acid polypeptide reads, in one-letter code: uncharacterized protein (229 aa).

7 helical membrane passes run 21–41 (IYSLVGMGVGLSAFVSYLMLY), 56–76 (MIYYGAAIIELILVFVASGAA), 83–103 (ALPIFLIYSALNGFTLSFIIV), 109–129 (TVFQAFLSSAAVFFAMSIIGV), 141–161 (AMFAALIGVVVASLINLFIGS), 162–182 (GMMSYVISVISVLIFSGLIAS), and 202–222 (WAVAMALSLYLDFINLFISLL).

Belongs to the BI1 family.

It is found in the cell membrane. This is an uncharacterized protein from Streptococcus pyogenes serotype M6 (strain ATCC BAA-946 / MGAS10394).